We begin with the raw amino-acid sequence, 390 residues long: Glutamate 5-kinase (390 aa).

Residue Lys29 participates in ATP binding. Ser69, Asp156, and Asn168 together coordinate substrate. 188–189 lines the ATP pocket; sequence TD. The PUA domain maps to 295–374; sequence SGSLIVDAGA…EQFDRILGNN (80 aa).

It belongs to the glutamate 5-kinase family.

The protein localises to the cytoplasm. The enzyme catalyses L-glutamate + ATP = L-glutamyl 5-phosphate + ADP. Its pathway is amino-acid biosynthesis; L-proline biosynthesis; L-glutamate 5-semialdehyde from L-glutamate: step 1/2. Its function is as follows. Catalyzes the transfer of a phosphate group to glutamate to form L-glutamate 5-phosphate. The polypeptide is Glutamate 5-kinase (Psychrobacter arcticus (strain DSM 17307 / VKM B-2377 / 273-4)).